The sequence spans 702 residues: Serotransferrin-A (702 aa).

Residues 1-19 (MDLSLRVALCLSMLALCLA) form the signal peptide. Transferrin-like domains lie at 26–340 (VRWC…ALKE) and 353–685 (VRWC…SLNK). 2 disulfides stabilise this stretch: Cys-29/Cys-64 and Cys-39/Cys-55. Residues Asp-79 and Tyr-111 each contribute to the Fe(3+) site. Disulfide bonds link Cys-134–Cys-217, Cys-179–Cys-192, and Cys-245–Cys-259. Thr-136, Lys-140, Ala-142, and Gly-143 together coordinate hydrogencarbonate. Fe(3+) is bound at residue Tyr-211. A Fe(3+)-binding site is contributed by His-267. Residues 340 to 349 (EGVKEDDSAA) form a connecting region region. 2 disulfides stabilise this stretch: Cys-356/Cys-388 and Cys-366/Cys-379. 2 residues coordinate Fe(3+): Asp-403 and Tyr-442. 7 cysteine pairs are disulfide-bonded: Cys-413–Cys-697, Cys-431–Cys-658, Cys-465–Cys-544, Cys-489–Cys-686, Cys-499–Cys-513, Cys-510–Cys-527, and Cys-584–Cys-598. Hydrogencarbonate-binding residues include Thr-467, Arg-471, Ala-473, and Gly-474. Tyr-538 is a Fe(3+) binding site. His-606 is a Fe(3+) binding site.

It belongs to the transferrin family. In terms of assembly, monomer. Plasma.

The protein localises to the secreted. Transferrins are iron binding transport proteins which can bind two Fe(3+) ions in association with the binding of an anion, usually bicarbonate. It is responsible for the transport of iron from sites of absorption and heme degradation to those of storage and utilization. Serum transferrin may also have a further role in stimulating cell proliferation. The sequence is that of Serotransferrin-A (tf-a) from Xenopus laevis (African clawed frog).